An 805-amino-acid polypeptide reads, in one-letter code: Rho GTPase-activating protein 42 (805 aa).

A BAR domain is found at 7-262 (EFSDSFLDSP…IRSAEQDFKA (256 aa)). A coiled-coil region spans residues 225–262 (KQQLQFNLQNTRNNFESTRQEVENLMRRIRSAEQDFKA). In terms of domain architecture, PH spans 265-374 (QWTMEGFLYV…WMEAMDGKEP (110 aa)). A Rho-GAP domain is found at 376 to 572 (YTLPALLSKK…ILIENYDKIF (197 aa)). Disordered stretches follow at residues 576 to 600 (PDPN…RSKA), 625 to 725 (SDTF…SELL), and 765 to 805 (VSRS…PGSV). Residues 626–654 (DTFSSSPSSTPMGSMESLSSHSSEQNSCS) show a composition bias toward low complexity. The segment covering 670–693 (LCWTTPSPSTNGPKSPACTTSPDS) has biased composition (polar residues). Residues 694 to 704 (SSKEDANKTDG) show a composition bias toward basic and acidic residues. Positions 710 to 721 (LSTSPGDRSSPA) are enriched in polar residues. Over residues 782 to 793 (PPKDGMRFRDDS) the composition is skewed to basic and acidic residues.

Its function is as follows. May influence blood pressure by functioning as a GTPase-activating protein in vascular smooth muscle. The protein is Rho GTPase-activating protein 42 of Danio rerio (Zebrafish).